Reading from the N-terminus, the 365-residue chain is Peptide chain release factor 1 (365 aa).

Gln242 is subject to N5-methylglutamine.

Belongs to the prokaryotic/mitochondrial release factor family. Methylated by PrmC. Methylation increases the termination efficiency of RF1.

It localises to the cytoplasm. Its function is as follows. Peptide chain release factor 1 directs the termination of translation in response to the peptide chain termination codons UAG and UAA. The chain is Peptide chain release factor 1 from Fusobacterium nucleatum subsp. nucleatum (strain ATCC 25586 / DSM 15643 / BCRC 10681 / CIP 101130 / JCM 8532 / KCTC 2640 / LMG 13131 / VPI 4355).